A 1274-amino-acid polypeptide reads, in one-letter code: MASGSGDSVTRRSVASQFFTQEEGPGIDGMTTSERVVDLLNQAALITNDSKITVLKQVQELIINKDPTLLDNFLDEIIAFQADKSIEVRKFVIGFIEEACKRDIELLLKLIANLNMLLRDENVNVVKKAILTMTQLYKVALQWMVKSRVISELQEACWDMVSAMAGDIILLLDSDNDGIRTHAIKFVEGLIVTLSPRMADSEIPRRQEHDISLDRIPRDHPYIQYNVLWEEGKAALEQLLKFMVHPAISSINLTTALGSLANIARQRPMFMSEVIQAYETLHANLPPTLAKSQVSSVRKNLKLHLLSVLKHPASLEFQAQITTLLVDLGTPQAEIARNMPSSKDTRKRPRDDSDSTLKKMKLEPNLGEDDEDKDLEPGPSGTSKASAQISGQSDTDITAEFLQPLLTPDNVANLVLISMVYLPEAMPASFQAIYTPVESAGTEAQIKHLARLMATQMTAAGLGPGVEQTKQCKEEPKEEKVVKTESVLIKRRLSAQGQAISVVGSLSSMSPLEEEAPQAKRRPEPIIPVTQPRLAGAGGRKKIFRLSDVLKPLTDAQVEAMKLGAVKRILRAEKAVACSGAAQVRIKILASLVTQFNSGLKAEVLSFILEDVRARLDLAFAWLYQEYNAYLAAGASGSLDKYEDCLIRLLSGLQEKPDQKDGIFTKVVLEAPLITESALEVVRKYCEDESRTYLGMSTLRDLIFKRPSRQFQYLHVLLDLSSHEKDKVRSQALLFIKRMYEKEQLREYVEKFALNYLQLLVHPNPPSVLFGADKDTEVAAPWTEETVKQCLYLYLALLPQNHKLIHELAAVYTEAIADIKRTVLRVIEQPIRGMGMNSPELLLLVENCPKGAETLVTRCLHSLTDKVPPSPELVKRVRDLYHKRLPDVRFLIPVLNGLEKKEVIQALPKLIKLNPIVVKEVFNRLLGTQHGEGNSALSPLNPGELLIALHNIDSVKCDMKSIIKATNLCFAERNVYTSEVLAVVMQQLMEQSPLPMLLMRTVIQSLTMYPRLGGFVMNILSRLIMKQVWKYPKVWEGFIKCCQRTKPQSFQVILQLPPQQLGAVFDKCPELREPLLAHVRSFTPHQQAHIPNSIMTILEASGKQEPEAKEAPAGPLEEDDLEPLTLAPAPAPRPPQDLIGLRLAQEKALKRQLEEEQKLKPGGVGAPSSSSPSPSPSARPGPPPSEEAMDFREEGPECETPGIFISMDDDSGLTEAALLDSSLEGPLPKETAAGGLTLKEERSPQTLAPVGEDAMKTPSPAAEDAREPEAKGNS.

The interaction with HSF1 stretch occupies residues 1 to 124; it reads MASGSGDSVT…NMLLRDENVN (124 aa). Position 13 is a phosphoserine (Ser13). HEAT repeat units follow at residues 31–64, 67–101, 104–146, 153–192, and 227–266; these read TTSERVVDLLNQAALITNDSKITVLKQVQELIIN, PTLLDNFLDEIIAFQADKSIEVRKFVIGFIEEACK, IELL…WMVK, LQEACWDMVSAMAGDIILLLDSDNDGIRTHAIKFVEGLIV, and VLWEEGKAALEQLLKFMVHPAISSINLTTALGSLANIARQ. Residues 335–392 are disordered; that stretch reads IARNMPSSKDTRKRPRDDSDSTLKKMKLEPNLGEDDEDKDLEPGPSGTSKASAQISGQ. The Nuclear localization signal signature appears at 345 to 360; it reads TRKRPRDDSDSTLKKM. A compositionally biased stretch (basic and acidic residues) spans 349–362; the sequence is PRDDSDSTLKKMKL. Lys361 participates in a covalent cross-link: Glycyl lysine isopeptide (Lys-Gly) (interchain with G-Cter in SUMO1); alternate. Residue Lys361 forms a Glycyl lysine isopeptide (Lys-Gly) (interchain with G-Cter in SUMO2); alternate linkage. Residues 380–392 are compositionally biased toward polar residues; that stretch reads SGTSKASAQISGQ. Lys483 is covalently cross-linked (Glycyl lysine isopeptide (Lys-Gly) (interchain with G-Cter in SUMO2)). A Phosphoserine modification is found at Ser494. Disordered regions lie at residues 1102 to 1137 and 1149 to 1274; these read GKQEPEAKEAPAGPLEEDDLEPLTLAPAPAPRPPQD and LKRQ…KGNS. Residues 1149 to 1159 are compositionally biased toward basic and acidic residues; sequence LKRQLEEEQKL. Positions 1173 to 1185 are enriched in pro residues; sequence SPSPSARPGPPPS. Phosphoserine occurs at positions 1221 and 1222. Lys1239 participates in a covalent cross-link: Glycyl lysine isopeptide (Lys-Gly) (interchain with G-Cter in SUMO1). A Phosphoserine modification is found at Ser1243. A Phosphothreonine modification is found at Thr1257. Ser1259 is modified (phosphoserine). The segment covering 1263 to 1274 has biased composition (basic and acidic residues); sequence EDAREPEAKGNS.

This sequence belongs to the Symplekin family. As to quaternary structure, found in a heat-sensitive complex at least composed of several cleavage and polyadenylation specific and cleavage stimulation factors. Interacts with CPSF2, CPSF3 and CSTF2. Interacts (via N-terminus) with HSF1; this interaction is direct and occurs upon heat shock. Interacts with SSU72. As to expression, in testis, expressed in polar epithelia and Sertoli cells but not in vascular endothelia. The protein is detected in stomach, duodenum, pancreas, liver, fetal brain, carcinomas, lens-forming cells, fibroblasts, lymphocytes, lymphoma cells, erythroleukemia cells but not in endothelium of vessels, epidermis, intercalated disks, Purkinje fiber cells of the heart and lymph node.

The protein localises to the cytoplasm. Its subcellular location is the cytoskeleton. It localises to the cell junction. It is found in the tight junction. The protein resides in the cell membrane. The protein localises to the nucleus. Its subcellular location is the nucleoplasm. In terms of biological role, scaffold protein that functions as a component of a multimolecular complex involved in histone mRNA 3'-end processing. Specific component of the tight junction (TJ) plaque, but might not be an exclusively junctional component. May have a house-keeping rule. Is involved in pre-mRNA polyadenylation. Enhances SSU72 phosphatase activity. This Homo sapiens (Human) protein is Symplekin (SYMPK).